A 265-amino-acid chain; its full sequence is Small ribosomal subunit protein eS1 (265 aa).

Disordered stretches follow at residues 1 to 24 (MTQG…RTID) and 240 to 265 (HEKK…LLAQ). The span at 240-253 (HEKKGEKATGRDGA) shows a compositional bias: basic and acidic residues.

It belongs to the eukaryotic ribosomal protein eS1 family. In terms of assembly, component of the small ribosomal subunit. Mature ribosomes consist of a small (40S) and a large (60S) subunit. The 40S subunit contains about 33 different proteins and 1 molecule of RNA (18S). The 60S subunit contains about 49 different proteins and 3 molecules of RNA (25S, 5.8S and 5S).

The protein localises to the cytoplasm. The polypeptide is Small ribosomal subunit protein eS1 (Tetrahymena thermophila (strain SB210)).